The chain runs to 503 residues: Beta-mannosyltransferase 4 (503 aa).

Topologically, residues 1–24 (MKLDTQQISHLLSRQMYHLAPRKK) are cytoplasmic. Residues 25-45 (LLIWGGSLGFVLLLLIVASSH) form a helical membrane-spanning segment. At 46-503 (QRIRSTILHR…QYCQRYGELH (458 aa)) the chain is on the extracellular side. N468 is a glycosylation site (N-linked (GlcNAc...) asparagine).

It belongs to the BMT family.

Its subcellular location is the membrane. Its function is as follows. Beta-mannosyltransferase involved in cell wall biosynthesis. Responsible for addition of a hexose to the beta-mannose chain. The protein is Beta-mannosyltransferase 4 (BMT4) of Komagataella phaffii (strain ATCC 76273 / CBS 7435 / CECT 11047 / NRRL Y-11430 / Wegner 21-1) (Yeast).